We begin with the raw amino-acid sequence, 449 residues long: Adenylyltransferase and sulfurtransferase MOCS3 (449 aa).

Residues Gly-96, Asp-117, 124 to 128 (SNLHR), Lys-141, and 185 to 186 (DN) each bind ATP. Zn(2+) is bound by residues Cys-227 and Cys-230. Residue Cys-244 is the Glycyl thioester intermediate; for adenylyltransferase activity of the active site. Zn(2+)-binding residues include Cys-302 and Cys-305. Residues 351-447 (QDKPHLLLDV…WTNQIDENFP (97 aa)) enclose the Rhodanese domain. Cys-406 acts as the Cysteine persulfide intermediate; for sulfurtransferase activity in catalysis.

In the N-terminal section; belongs to the HesA/MoeB/ThiF family. UBA4 subfamily. Zn(2+) is required as a cofactor.

It is found in the cytoplasm. It localises to the cytosol. It catalyses the reaction [molybdopterin-synthase sulfur-carrier protein]-C-terminal Gly-Gly + ATP + H(+) = [molybdopterin-synthase sulfur-carrier protein]-C-terminal Gly-Gly-AMP + diphosphate. The enzyme catalyses [molybdopterin-synthase sulfur-carrier protein]-C-terminal Gly-Gly-AMP + S-sulfanyl-L-cysteinyl-[cysteine desulfurase] + AH2 = [molybdopterin-synthase sulfur-carrier protein]-C-terminal-Gly-aminoethanethioate + L-cysteinyl-[cysteine desulfurase] + A + AMP + 2 H(+). It participates in tRNA modification; 5-methoxycarbonylmethyl-2-thiouridine-tRNA biosynthesis. Its pathway is cofactor biosynthesis; molybdopterin biosynthesis. Its function is as follows. Plays a central role in 2-thiolation of mcm(5)S(2)U at tRNA wobble positions of cytosolic tRNA(Lys), tRNA(Glu) and tRNA(Gln). Also essential during biosynthesis of the molybdenum cofactor. Acts by mediating the C-terminal thiocarboxylation of sulfur carriers URM1 and MOCS2A. Its N-terminus first activates URM1 and MOCS2A as acyl-adenylates (-COAMP), then the persulfide sulfur on the catalytic cysteine is transferred to URM1 and MOCS2A to form thiocarboxylation (-COSH) of their C-terminus. The reaction probably involves hydrogen sulfide that is generated from the persulfide intermediate and that acts as a nucleophile towards URM1 and MOCS2A. Subsequently, a transient disulfide bond is formed. Does not use thiosulfate as sulfur donor; NFS1 probably acting as a sulfur donor for thiocarboxylation reactions. This chain is Adenylyltransferase and sulfurtransferase MOCS3, found in Drosophila grimshawi (Hawaiian fruit fly).